Reading from the N-terminus, the 155-residue chain is Small ribosomal subunit protein uS13 (155 aa).

A compositionally biased stretch (basic residues) spans 135 to 145 (QHTKTTGRRGR). Residues 135–155 (QHTKTTGRRGRTVGVSRTKGA) are disordered. Over residues 146-155 (TVGVSRTKGA) the composition is skewed to low complexity.

The protein belongs to the universal ribosomal protein uS13 family. As to quaternary structure, component of the small ribosomal subunit.

The protein localises to the cytoplasm. Its function is as follows. Component of the small ribosomal subunit. The ribosome is a large ribonucleoprotein complex responsible for the synthesis of proteins in the cell. This is Small ribosomal subunit protein uS13 (RPS18) from Entamoeba histolytica (strain ATCC 30459 / HM-1:IMSS / ABRM).